Consider the following 123-residue polypeptide: UPF0382 membrane protein YwdK (123 aa).

4 helical membrane-spanning segments follow: residues 3 to 23, 49 to 69, 71 to 91, and 96 to 116; these read VFIILGAINALLAVGLGAFGA, ALGLFVVAFLADKLSGIGSVT, AGWLMFAGIVLFSGSLYILSV, and ILGAITPLGGVAFIISWIMIV.

This sequence belongs to the UPF0382 family.

It localises to the cell membrane. The protein is UPF0382 membrane protein YwdK (ywdK) of Bacillus subtilis (strain 168).